The chain runs to 300 residues: N-carbamoylputrescine amidase (300 aa).

Residues 8–266 (VTVAALQFAC…EAVLVAQFDL (259 aa)) form the CN hydrolase domain. E47 serves as the catalytic Proton acceptor. K120 acts as the Proton donor in catalysis. C157 (nucleophile) is an active-site residue.

Belongs to the carbon-nitrogen hydrolase superfamily. In terms of assembly, homooctamer.

It catalyses the reaction N-carbamoylputrescine + H2O + 2 H(+) = putrescine + NH4(+) + CO2. Its pathway is amine and polyamine biosynthesis; putrescine biosynthesis via agmatine pathway; putrescine from N-carbamoylputrescine (amidase route): step 1/1. Its function is as follows. Involved in polyamine biosynthesis. The polypeptide is N-carbamoylputrescine amidase (CPA) (Solanum lycopersicum (Tomato)).